A 268-amino-acid polypeptide reads, in one-letter code: Microtubule-associated protein RP/EB family member 1 (268 aa).

N-acetylalanine is present on A2. One can recognise a Calponin-homology (CH) domain in the interval 14–116; sequence NLSRHDMLAW…FVQWFKKFFD (103 aa). The residue at position 66 (K66) is an N6-crotonyllysine. Phosphotyrosine is present on Y124. Residues 124-268 are interaction with MTUS2/TIP150; the sequence is YDPVAARQGQ…GGPQEEQEEY (145 aa). The tract at residues 146–187 is disordered; sequence LNKPKKPLTSSSAAPQRPISTQRTAAAPKAGPGVVRKNPGVG. Residues 153–169 are compositionally biased toward polar residues; it reads LTSSSAAPQRPISTQRT. Phosphoserine occurs at positions 155 and 165. Positions 185–255 constitute an EB1 C-terminal domain; that stretch reads GVGNGDDEAA…LYATDEGFVI (71 aa). The interaction with CDK5RAP2 stretch occupies residues 185-268; sequence GVGNGDDEAA…GGPQEEQEEY (84 aa). The segment at 206–211 is interaction with APC; sequence TVEDLE. The DCTN1-binding stretch occupies residues 208–268; it reads EDLEKERDFY…GGPQEEQEEY (61 aa). Position 220 is an N6-acetyllysine (K220). Residues 220–242 form an APC-binding region; that stretch reads KLRNIELICQENEGENDPVLQRI. The interaction with SKA1 stretch occupies residues 232-255; that stretch reads EGENDPVLQRIVDILYATDEGFVI.

This sequence belongs to the MAPRE family. In terms of assembly, homodimer. Heterodimer with MAPRE3. Interacts with DCTN1, DCTN2, TERF1 and dynein intermediate chain. Interaction with DIAPH1 and DIAPH2. Interacts (via C-terminal residues 206-211) with APC (via C-terminal residues 2674-2843); the interaction inhibits association with and bundling of F-actin. Interacts with CLASP2, DST, KIF2C and STIM1; probably required for their targeting to the growing microtubule plus ends. Interacts with MTUS2; interaction is direct and probably targets MTUS2 to microtubules. Interacts (via C-terminus) with SKA1 (via SXIP motif); the interaction is direct and stabilizes the kinetochore-microtubule attachment of the SKA1 complex. Interacts with APC2. Interacts with CLASP1. Interacts with CDK5RAP2. Interacts with MACF1. Interacts with RABL2/RABL2A; binds preferentially to GTP-bound RABL2. Interacts with KCNAB2. Interacts (via C-terminus) with CLIP1. Interacts with SLAIN2 and SLAIN1. Interacts with KIF18B; this interaction is required for efficient accumulation of KIF18B at microtubule plus ends. Interacts with MISP. Interacts with KNSTRN. Interacts with NCKAP5L. Interacts with CAMSAP2. Interacts with PDE4DIP isoform 13/MMG8/SMYLE; this interaction is required for its recruitment to the Golgi apparatus. Forms a pericentrosomal complex with AKAP9, CDK5RAP2 and PDE4DIP isoform 13/MMG8/SMYLE; within this complex, MAPRE1 binding to CDK5RAP2 may be mediated by PDE4DIP. Interacts with AKNA. Interacts with GAS2L1, GAS2L2, and GAS2L3. Interacts with RARRES1 and AGBL2. Acetylation at Lys-220 by KAT2B/PCAF promotes dynamic kinetochore-microtubule interactions in early mitosis. Post-translationally, crotonylated by KAT5 during mitosis, promoting astral microtubule plasticity and dynamic connection between astral microtubules and the cortex during mitotic chromosome segregation, thereby ensuring accurate spindle positioning in mitosis. Decrotonylated by HDAC3. Ubiquitously expressed.

The protein resides in the cytoplasm. The protein localises to the cytoskeleton. Its subcellular location is the microtubule organizing center. It is found in the centrosome. It localises to the golgi apparatus. The protein resides in the spindle. The protein localises to the spindle pole. Functionally, plus-end tracking protein (+TIP) that binds to the plus-end of microtubules and regulates the dynamics of the microtubule cytoskeleton. Recruits other +TIP proteins to microtubules by binding to a conserved Ser-X-Leu-Pro (SXLP) motif in their polypeptide chains. Promotes cytoplasmic microtubule nucleation and elongation. Involved in mitotic spindle positioning by stabilizing microtubules and promoting dynamic connection between astral microtubules and the cortex during mitotic chromosome segregation. Assists chromosome alignment in metaphase by recruiting the SKA complex to the spindle and stabilizing its interactions with microtubule bundles (K-fibers). Also acts as a regulator of minus-end microtubule organization: interacts with the complex formed by AKAP9 and PDE4DIP, leading to recruit CAMSAP2 to the Golgi apparatus, thereby tethering non-centrosomal minus-end microtubules to the Golgi, an important step for polarized cell movement. Promotes elongation of CAMSAP2-decorated microtubule stretches on the minus-end of microtubules. Acts as a regulator of autophagosome transport via interaction with CAMSAP2. Functions downstream of Rho GTPases and DIAPH1 in stable microtubule formation. May play a role in cell migration. The sequence is that of Microtubule-associated protein RP/EB family member 1 from Homo sapiens (Human).